We begin with the raw amino-acid sequence, 302 residues long: Rab effector Noc2 (302 aa).

Residues 41 to 158 enclose the RabBD domain; it reads QRRTQCLSPG…KRSGAWFYKG (118 aa). An FYVE-type zinc finger spans residues 89–146; the sequence is GNGVSQCLLCGEMLGFLGSSSVFCKDCRKKVCTKCGIEASPGQKRPLWLCKICSEQRE. Residues cysteine 95, cysteine 98, cysteine 112, cysteine 115, cysteine 120, cysteine 123, cysteine 138, and cysteine 141 each coordinate Zn(2+). Disordered regions lie at residues 174–194 and 206–302; these read DPHF…SAEV and VSSD…TTHY. A Phosphoserine modification is found at serine 248. Residues 258 to 269 are compositionally biased toward low complexity; sequence SHLSGSQSSLGS.

As to quaternary structure, recruited to dense-core vesicles through specific interaction with RAB27A in endocrine cells. Interacts with RAB3A, RAB3B, RAB3C and RAB3D. Interacts with ZYX. In terms of tissue distribution, highly expressed in pancreatic islets and parotid. High to moderate expression in adrenal gland, pituitary gland and ovary.

Its subcellular location is the cytoplasm. The protein localises to the cytoplasmic vesicle. It is found in the secretory vesicle membrane. In terms of biological role, rab GTPase effector involved in the late steps of regulated exocytosis, both in endocrine and exocrine cells. Regulates the exocytosis of dense-core vesicles in neuroendocrine cells through interaction with RAB27A. Acts as a potential RAB3B effector protein in epithelial cells. This Rattus norvegicus (Rat) protein is Rab effector Noc2 (Rph3al).